A 257-amino-acid chain; its full sequence is uncharacterized protein (257 aa).

The chain crosses the membrane as a helical span at residues 6-26 (IFWLNLAAIIIISIVVSGDMF).

This sequence belongs to the staphylococcal tandem lipoprotein family.

It is found in the cell membrane. This is an uncharacterized protein from Staphylococcus aureus (strain COL).